A 277-amino-acid polypeptide reads, in one-letter code: Probable endonuclease 4 (277 aa).

Zn(2+) is bound by residues H69, H109, E145, D179, H182, H214, D227, H229, and E259.

The protein belongs to the AP endonuclease 2 family. Zn(2+) serves as cofactor.

It carries out the reaction Endonucleolytic cleavage to 5'-phosphooligonucleotide end-products.. Functionally, endonuclease IV plays a role in DNA repair. It cleaves phosphodiester bonds at apurinic or apyrimidinic (AP) sites, generating a 3'-hydroxyl group and a 5'-terminal sugar phosphate. The sequence is that of Probable endonuclease 4 from Bacteroides thetaiotaomicron (strain ATCC 29148 / DSM 2079 / JCM 5827 / CCUG 10774 / NCTC 10582 / VPI-5482 / E50).